The sequence spans 234 residues: Orotidine 5'-phosphate decarboxylase (234 aa).

Residues aspartate 14, lysine 36, 63–72, threonine 118, arginine 179, glutamine 188, glycine 208, and arginine 209 each bind substrate; that span reads DMKLLDIDNT. The active-site Proton donor is the lysine 65.

The protein belongs to the OMP decarboxylase family. Type 1 subfamily. As to quaternary structure, homodimer.

The enzyme catalyses orotidine 5'-phosphate + H(+) = UMP + CO2. It functions in the pathway pyrimidine metabolism; UMP biosynthesis via de novo pathway; UMP from orotate: step 2/2. Its function is as follows. Catalyzes the decarboxylation of orotidine 5'-monophosphate (OMP) to uridine 5'-monophosphate (UMP). In Rhizobium meliloti (strain 1021) (Ensifer meliloti), this protein is Orotidine 5'-phosphate decarboxylase.